A 97-amino-acid polypeptide reads, in one-letter code: Large ribosomal subunit protein bL28 (97 aa).

It belongs to the bacterial ribosomal protein bL28 family.

The chain is Large ribosomal subunit protein bL28 from Rickettsia akari (strain Hartford).